The chain runs to 495 residues: Ankyrin repeat domain-containing protein 34A (495 aa).

ANK repeat units lie at residues Thr-4–Glu-33, Gln-37–Ile-72, Leu-76–Val-106, and Ala-110–Thr-139. Residue Gln-15 is modified to N5-methylglutamine. Polar residues-rich tracts occupy residues Asp-147–Ser-162 and Val-180–Thr-191. A disordered region spans residues Asp-147–Arg-495. Residues Ala-203–Phe-213 are compositionally biased toward basic and acidic residues. Over residues Asp-223–Lys-232 the composition is skewed to pro residues. The segment covering Pro-233–Lys-242 has biased composition (basic residues). Phosphothreonine is present on Thr-315. Residues Ser-375–Ser-385 show a composition bias toward polar residues. Over residues Arg-462–Ser-472 the composition is skewed to basic residues. A compositionally biased stretch (gly residues) spans Gln-485–Arg-495.

This sequence belongs to the ANKRD34 family. Methylated at Gln-15 by N6AMT1.

The sequence is that of Ankyrin repeat domain-containing protein 34A (Ankrd34a) from Rattus norvegicus (Rat).